The sequence spans 711 residues: Retrovirus-related Pol polyprotein from type-1 retrotransposable element R2 (711 aa).

The region spanning 45 to 323 (LHLLRGHVPT…QTFRYLGHFF (279 aa)) is the Reverse transcriptase domain. Residues 444 to 711 (LFSCPSFDHL…RAVWSRQAGA (268 aa)) are nucleic acid-binding endonuclease.

The enzyme catalyses DNA(n) + a 2'-deoxyribonucleoside 5'-triphosphate = DNA(n+1) + diphosphate. This chain is Retrovirus-related Pol polyprotein from type-1 retrotransposable element R2, found in Popillia japonica (Japanese beetle).